The primary structure comprises 1047 residues: Helicase-like transcription factor CHR27 (1047 aa).

Over residues 1–11 (MDSAIEISSGS) the composition is skewed to low complexity. 3 disordered regions span residues 1–89 (MDSA…SGSG), 103–130 (RTLPPSFNSPPLPARSGTNNISNASGSR), and 145–174 (KRTLPPSFNPPPLPSRSGTNNIRNAGGSRF). Polar residues-rich tracts occupy residues 52–88 (TNQAPPNGASSDTSRPGVSKPFTGNGNTVNSRISSGS) and 118–128 (SGTNNISNASG). The Helicase ATP-binding domain maps to 296 to 597 (ETSSFNCPGG…YSYFRFLRYD (302 aa)). Residue 309 to 316 (DDQGLGKT) participates in ATP binding. Disordered stretches follow at residues 349–407 (ADDE…TRAF) and 511–533 (VGASKKSKRRGRKSTNDTSSEPD). Over residues 354 to 368 (DNAKHESGSHVKPEL) the composition is skewed to basic and acidic residues. Over residues 370–379 (VSSNSETSVL) the composition is skewed to polar residues. Residues 385 to 400 (DENDSSDMEKAEDEEA) are compositionally biased toward acidic residues. The span at 511-523 (VGASKKSKRRGRK) shows a compositional bias: basic residues. Residues 751 to 790 (CYECNEPPEKPVVTLCGHIFCYECVLEYITGDENTCPVPR) form an RING-type; degenerate zinc finger. Residues 851-868 (QPDSPNSAQHGQMPSSSR) show a composition bias toward polar residues. The tract at residues 851–873 (QPDSPNSAQHGQMPSSSRPYDDD) is disordered. Positions 887-1042 (SPSQGAVKTI…ATRLTVDDLK (156 aa)) constitute a Helicase C-terminal domain.

Belongs to the SNF2/RAD54 helicase family. RAD16 subfamily. As to quaternary structure, interacts with SUVR2. Interacts with itself.

The protein localises to the nucleus. Probable helicase-like transcription factor involved in transcriptional gene silencing. Associates with SUVR2 and contributes to transcriptional gene silencing at RNA-directed DNA methylation (RdDM) target loci but also at RdDM-independent target loci. May be involved in nucleosome positioning to form ordered nucleosome arrays on chromatin. Associates with SUVR2 and functions redundantly with FRG2. Required for the efficient methylation of a broad range of RdDM target loci. The chain is Helicase-like transcription factor CHR27 from Arabidopsis thaliana (Mouse-ear cress).